An 82-amino-acid polypeptide reads, in one-letter code: uncharacterized protein (82 aa).

This is an uncharacterized protein from Orgyia pseudotsugata (Douglas-fir tussock moth).